The chain runs to 388 residues: Lipid-A-disaccharide synthase (388 aa).

It belongs to the LpxB family.

It carries out the reaction a lipid X + a UDP-2-N,3-O-bis[(3R)-3-hydroxyacyl]-alpha-D-glucosamine = a lipid A disaccharide + UDP + H(+). The protein operates within bacterial outer membrane biogenesis; LPS lipid A biosynthesis. In terms of biological role, condensation of UDP-2,3-diacylglucosamine and 2,3-diacylglucosamine-1-phosphate to form lipid A disaccharide, a precursor of lipid A, a phosphorylated glycolipid that anchors the lipopolysaccharide to the outer membrane of the cell. The sequence is that of Lipid-A-disaccharide synthase from Burkholderia mallei (strain ATCC 23344).